The chain runs to 113 residues: Iron-sulfur cluster insertion protein ErpA (113 aa).

Iron-sulfur cluster-binding residues include cysteine 41, cysteine 105, and cysteine 107.

Belongs to the HesB/IscA family. As to quaternary structure, homodimer. It depends on iron-sulfur cluster as a cofactor.

Required for insertion of 4Fe-4S clusters for at least IspG. The protein is Iron-sulfur cluster insertion protein ErpA of Hydrogenovibrio crunogenus (strain DSM 25203 / XCL-2) (Thiomicrospira crunogena).